We begin with the raw amino-acid sequence, 405 residues long: Type III polyketide synthase 10 (405 aa).

The span at 1-18 (MVSTNAGGIASKQASSMA) shows a compositional bias: polar residues. Positions 1–20 (MVSTNAGGIASKQASSMAPN) are disordered. Cys170 (nucleophile) is an active-site residue.

This sequence belongs to the thiolase-like superfamily. Chalcone/stilbene synthases family. As to quaternary structure, interacts with STS1. Expressed in adult flowers.

Its subcellular location is the endoplasmic reticulum. In terms of biological role, plant type III polyketide synthases (PKSs) that catalyzes the condensation of fatty acyl-CoA with malonyl-CoA to generate triketide and tetraketide alpha-pyrones, the main components of pollen exine and potential sporopollenin precursors. May be involved in the synthesis of sporopollenin precursors in tapetal cells to regulate pollen wall formation. Required for exine and Ubisch body formation in anthers. Does not possess chalcone synthase (CHS) activity in vitro with the substrates 4-coumaroyl-CoA and malonyl-CoA. The sequence is that of Type III polyketide synthase 10 from Oryza sativa subsp. japonica (Rice).